Consider the following 459-residue polypeptide: Methylenetetrahydrofolate--tRNA-(uracil-5-)-methyltransferase TrmFO (459 aa).

Residue 11–16 (GAGLAG) coordinates FAD.

The protein belongs to the MnmG family. TrmFO subfamily. FAD is required as a cofactor.

The protein localises to the cytoplasm. The catalysed reaction is uridine(54) in tRNA + (6R)-5,10-methylene-5,6,7,8-tetrahydrofolate + NADH + H(+) = 5-methyluridine(54) in tRNA + (6S)-5,6,7,8-tetrahydrofolate + NAD(+). The enzyme catalyses uridine(54) in tRNA + (6R)-5,10-methylene-5,6,7,8-tetrahydrofolate + NADPH + H(+) = 5-methyluridine(54) in tRNA + (6S)-5,6,7,8-tetrahydrofolate + NADP(+). Catalyzes the folate-dependent formation of 5-methyl-uridine at position 54 (M-5-U54) in all tRNAs. The sequence is that of Methylenetetrahydrofolate--tRNA-(uracil-5-)-methyltransferase TrmFO from Synechococcus sp. (strain CC9311).